Here is a 473-residue protein sequence, read N- to C-terminus: O-methyltransferase aclU (473 aa).

Residues D320 and 354-356 (GDF) each bind S-adenosyl-L-methionine. H373 functions as the Proton acceptor in the catalytic mechanism.

The protein belongs to the class I-like SAM-binding methyltransferase superfamily. Cation-independent O-methyltransferase family. COMT subfamily.

It participates in mycotoxin biosynthesis. Its function is as follows. O-methyltransferase; part of the gene cluster that mediates the biosynthesis of aspirochlorine (or antibiotic A30641), an unusual halogenated spiro compound with distinctive antifungal properties due to selective inhibition of protein biosynthesis, and which is also active against bacteria, viruses, and murine tumor cells. The non-ribosomal peptide synthetase (NRPS) aclP is responsible the formation of the diketopiperazine (DKP) core from the condensation of 2 phenylalanine residues. One Phe residue is tailored into chlorotyrosine by hydroxylation and chlorination, whereas the second Phe undergoes an unprecedented C-C bond cleavage to be converted into glycine. After formation of the DKP, sulfur is incorporated into the DKP by conjugation with glutathione by aclG, followed by its stepwise degradation to the thiol by aclI, aclJ and aclK, and the dithiol oxidation by aclT. In addition, oxygenases (aclB, aclC, aclL and aclO) and O-methyltransferases (aclM and aclU) act as tailoring enzymes to produce the intermediate dechloroaspirochlorine. Ultimately, chlorination of dechloroaspirochlorine by the halogenase aclH is the last step in the aspirochlorine pathway. This is O-methyltransferase aclU from Aspergillus oryzae (strain ATCC 42149 / RIB 40) (Yellow koji mold).